Here is a 217-residue protein sequence, read N- to C-terminus: Probable transaldolase (217 aa).

K83 serves as the catalytic Schiff-base intermediate with substrate.

Belongs to the transaldolase family. Type 3B subfamily.

It is found in the cytoplasm. It carries out the reaction D-sedoheptulose 7-phosphate + D-glyceraldehyde 3-phosphate = D-erythrose 4-phosphate + beta-D-fructose 6-phosphate. The protein operates within carbohydrate degradation; pentose phosphate pathway; D-glyceraldehyde 3-phosphate and beta-D-fructose 6-phosphate from D-ribose 5-phosphate and D-xylulose 5-phosphate (non-oxidative stage): step 2/3. In terms of biological role, transaldolase is important for the balance of metabolites in the pentose-phosphate pathway. This is Probable transaldolase from Bartonella quintana (strain Toulouse) (Rochalimaea quintana).